The sequence spans 486 residues: Protein nucleotidyltransferase YdiU (486 aa).

Gly-90, Gly-92, Arg-93, Lys-113, Asp-125, Gly-126, Arg-176, and Arg-183 together coordinate ATP. The active-site Proton acceptor is Asp-252. Mg(2+) contacts are provided by Asn-253 and Asp-262. Asp-262 contacts ATP.

The protein belongs to the SELO family. Mg(2+) is required as a cofactor. It depends on Mn(2+) as a cofactor.

The enzyme catalyses L-seryl-[protein] + ATP = 3-O-(5'-adenylyl)-L-seryl-[protein] + diphosphate. The catalysed reaction is L-threonyl-[protein] + ATP = 3-O-(5'-adenylyl)-L-threonyl-[protein] + diphosphate. It carries out the reaction L-tyrosyl-[protein] + ATP = O-(5'-adenylyl)-L-tyrosyl-[protein] + diphosphate. It catalyses the reaction L-histidyl-[protein] + UTP = N(tele)-(5'-uridylyl)-L-histidyl-[protein] + diphosphate. The enzyme catalyses L-seryl-[protein] + UTP = O-(5'-uridylyl)-L-seryl-[protein] + diphosphate. The catalysed reaction is L-tyrosyl-[protein] + UTP = O-(5'-uridylyl)-L-tyrosyl-[protein] + diphosphate. Functionally, nucleotidyltransferase involved in the post-translational modification of proteins. It can catalyze the addition of adenosine monophosphate (AMP) or uridine monophosphate (UMP) to a protein, resulting in modifications known as AMPylation and UMPylation. This is Protein nucleotidyltransferase YdiU from Pseudomonas putida (strain ATCC 47054 / DSM 6125 / CFBP 8728 / NCIMB 11950 / KT2440).